A 356-amino-acid polypeptide reads, in one-letter code: NADH-quinone oxidoreductase subunit H (356 aa).

Transmembrane regions (helical) follow at residues 18-38 (IIMIAQSVLLLVVLLIAIAYI), 87-107 (GVFLLAPLVSCVLALAAWAVI), 120-140 (VGILFIFAISSLSIYGIIMAG), 166-186 (IGFVIITVLLCAGTLNLSAVV), 205-225 (ILNWYVWPLFPMFVVFYVSAL), 265-285 (AITTMCALATILFLGGWLPPI), 292-312 (WVPGVIWFALKLFFMFFLIAM), and 333-353 (FLPLSLVMVVVVAGVLHFAGI).

This sequence belongs to the complex I subunit 1 family. NDH-1 is composed of 14 different subunits. Subunits NuoA, H, J, K, L, M, N constitute the membrane sector of the complex.

Its subcellular location is the cell inner membrane. It catalyses the reaction a quinone + NADH + 5 H(+)(in) = a quinol + NAD(+) + 4 H(+)(out). NDH-1 shuttles electrons from NADH, via FMN and iron-sulfur (Fe-S) centers, to quinones in the respiratory chain. The immediate electron acceptor for the enzyme in this species is believed to be ubiquinone. Couples the redox reaction to proton translocation (for every two electrons transferred, four hydrogen ions are translocated across the cytoplasmic membrane), and thus conserves the redox energy in a proton gradient. This subunit may bind ubiquinone. This is NADH-quinone oxidoreductase subunit H from Bradyrhizobium sp. (strain ORS 278).